The chain runs to 182 residues: Probable RNA 2'-phosphotransferase (182 aa).

Belongs to the KptA/TPT1 family.

Removes the 2'-phosphate from RNA via an intermediate in which the phosphate is ADP-ribosylated by NAD followed by a presumed transesterification to release the RNA and generate ADP-ribose 1''-2''-cyclic phosphate (APPR&gt;P). May function as an ADP-ribosylase. In Herpetosiphon aurantiacus (strain ATCC 23779 / DSM 785 / 114-95), this protein is Probable RNA 2'-phosphotransferase.